The following is a 280-amino-acid chain: Orotidine 5'-phosphate decarboxylase (280 aa).

Residues aspartate 40, lysine 62 to histidine 64, aspartate 93 to threonine 102, tyrosine 228, and arginine 246 contribute to the substrate site. Catalysis depends on lysine 95, which acts as the Proton donor.

This sequence belongs to the OMP decarboxylase family.

It carries out the reaction orotidine 5'-phosphate + H(+) = UMP + CO2. It functions in the pathway pyrimidine metabolism; UMP biosynthesis via de novo pathway; UMP from orotate: step 2/2. The polypeptide is Orotidine 5'-phosphate decarboxylase (PYRG) (Solorina crocea).